Here is a 409-residue protein sequence, read N- to C-terminus: MAFGKSLFHAIGRVSLVRQIAAGLALGIVIGSVSPQLGLAAGLFGSLFVGALKAVAPVLVFILVAATIAQHQKGNKAHIRPIIVLYLIGTFSAALTAVIAGMVFPTHIVLAGAGDVSAAPPSGIVEVLKSLLMNLVANPINAIANANYIGILAWALVLGAALRNHGSDVTRQVVADLAEAVSTVVKWIIRFAPLGIFGLVSSTIAETGFGALAGYAKLLAVLLGCMAFIALVVNPAIVWWKIRRNPYPLVFTCLRESGVYAFFTRSSAANIPVNMALAKKLGLHEDTYSISIPLGATVNMGGAAITITVLAMAAAYTQGIQVDFATALLLSLVATVSACGASGVAGGSLLLIPLACSLFGISNDVAMQVVAVGFIIGVIQDSAETALNSSTDVLFTAAADLGRQRNRAE.

A run of 9 helical transmembrane segments spans residues 24 to 44 (LALG…AGLF), 48 to 68 (FVGA…AATI), 82 to 102 (IIVL…IAGM), 142 to 162 (AIAN…GAAL), 194 to 214 (LGIF…ALAG), 218 to 238 (LLAV…PAIV), 292 to 312 (IPLG…VLAM), 319 to 339 (GIQV…VSAC), and 365 to 385 (VAMQ…SAET).

The protein belongs to the dicarboxylate/amino acid:cation symporter (DAACS) (TC 2.A.23) family.

It localises to the cell inner membrane. It carries out the reaction L-serine(in) + Na(+)(in) = L-serine(out) + Na(+)(out). The enzyme catalyses L-threonine(in) + Na(+)(in) = L-threonine(out) + Na(+)(out). Its function is as follows. Involved in the import of serine and threonine into the cell, with the concomitant import of sodium (symport system). This is Serine/threonine transporter SstT from Neisseria meningitidis serogroup C / serotype 2a (strain ATCC 700532 / DSM 15464 / FAM18).